Consider the following 296-residue polypeptide: Glycine--tRNA ligase alpha subunit (296 aa).

It belongs to the class-II aminoacyl-tRNA synthetase family. Tetramer of two alpha and two beta subunits.

The protein localises to the cytoplasm. The enzyme catalyses tRNA(Gly) + glycine + ATP = glycyl-tRNA(Gly) + AMP + diphosphate. The protein is Glycine--tRNA ligase alpha subunit of Prochlorococcus marinus (strain SARG / CCMP1375 / SS120).